Here is a 345-residue protein sequence, read N- to C-terminus: Meiotically up-regulated gene 97 protein (345 aa).

2 helical membrane passes run 292–312 (MWVL…GLWM) and 319–329 (FAHGMLLNLGI).

The protein localises to the membrane. In terms of biological role, required for correct meiotic chromosome segregation. Appears to also have role in sporulation. The sequence is that of Meiotically up-regulated gene 97 protein (mug97) from Schizosaccharomyces pombe (strain 972 / ATCC 24843) (Fission yeast).